Reading from the N-terminus, the 576-residue chain is Type II restriction enzyme BsuRI (576 aa).

In terms of assembly, monomer. The cofactor is Mg(2+).

It carries out the reaction Endonucleolytic cleavage of DNA to give specific double-stranded fragments with terminal 5'-phosphates.. In terms of biological role, a P subtype restriction enzyme that recognizes the double-stranded sequence 5'-GGCC-3' and cleaves after G-2. This is Type II restriction enzyme BsuRI (hsdRR) from Bacillus subtilis.